A 45-amino-acid chain; its full sequence is Large ribosomal subunit protein bL34 (45 aa).

Residues 1–45 (MTKRTFGGTSRKRKRVSGFRVRMRSHTGRRVIKSRRKRGRERIAV) are disordered. A compositionally biased stretch (basic residues) spans 10–45 (SRKRKRVSGFRVRMRSHTGRRVIKSRRKRGRERIAV).

The protein belongs to the bacterial ribosomal protein bL34 family.

In Prochlorococcus marinus subsp. pastoris (strain CCMP1986 / NIES-2087 / MED4), this protein is Large ribosomal subunit protein bL34.